Reading from the N-terminus, the 151-residue chain is Transcriptional regulator MraZ (151 aa).

SpoVT-AbrB domains are found at residues 7 to 53 (EYDC…SQTE) and 82 to 125 (INEV…SPDL).

Belongs to the MraZ family. In terms of assembly, forms oligomers.

The protein localises to the cytoplasm. It localises to the nucleoid. The protein is Transcriptional regulator MraZ of Cytophaga hutchinsonii (strain ATCC 33406 / DSM 1761 / CIP 103989 / NBRC 15051 / NCIMB 9469 / D465).